The chain runs to 373 residues: Dynein regulatory complex protein 9 (373 aa).

Residues Glu145–Asp200 are a coiled coil. The 30-residue stretch at Arg336–Lys365 folds into the IQ domain.

This sequence belongs to the DRC9 family. As to quaternary structure, component of the nexin-dynein regulatory complex (N-DRC).

It is found in the cytoplasm. The protein resides in the cytoskeleton. The protein localises to the flagellum axoneme. Component of the nexin-dynein regulatory complex (N-DRC), a key regulator of ciliary/flagellar motility which maintains the alignment and integrity of the distal axoneme and regulates microtubule sliding in motile axonemes. The sequence is that of Dynein regulatory complex protein 9 from Chlamydomonas reinhardtii (Chlamydomonas smithii).